The chain runs to 130 residues: Ribonuclease P protein component 2 (130 aa).

It belongs to the eukaryotic/archaeal RNase P protein component 2 family. Consists of a catalytic RNA component and at least 4-5 protein subunits.

The protein localises to the cytoplasm. It catalyses the reaction Endonucleolytic cleavage of RNA, removing 5'-extranucleotides from tRNA precursor.. Part of ribonuclease P, a protein complex that generates mature tRNA molecules by cleaving their 5'-ends. The protein is Ribonuclease P protein component 2 of Methanococcus maripaludis (strain C6 / ATCC BAA-1332).